Here is a 366-residue protein sequence, read N- to C-terminus: MTSKINKIVNGPIPDSFLFDESKRLDSLKFDGTNLEVLDQLLLPHEFKYIPVEGVSDAFAVIKSMQVRGAPLIAVVGSLGLLLEIQKASELDSESIIQKINFLISSRPTAVDLRNSLNGLKPILESQDYSDVVKLEKCRSYLLNVYTDEKLQNRILVWNAYQELLSAFPDKEKLTVMTICNTGSLATISWGTALGVIRALHSENRLKLVYVLETRPYNQGIRLTSIELLHGEVPFKLITDSMAAWAMKNHQVDCVLTGADNVARNGDTANKIGTYMLAVLCKHHNINFYPVVPFTTINKNIATGEEIKIEERPSAEMLRVNGVLIGNSECPVWNPAFDVTPAHLITKILTDFGNWPPEMLEQQIPK.

The active-site Proton donor is Asp-260.

It belongs to the eIF-2B alpha/beta/delta subunits family. MtnA subfamily.

The protein resides in the cytoplasm. The protein localises to the nucleus. The catalysed reaction is 5-(methylsulfanyl)-alpha-D-ribose 1-phosphate = 5-(methylsulfanyl)-D-ribulose 1-phosphate. It functions in the pathway amino-acid biosynthesis; L-methionine biosynthesis via salvage pathway; L-methionine from S-methyl-5-thio-alpha-D-ribose 1-phosphate: step 1/6. Functionally, catalyzes the interconversion of methylthioribose-1-phosphate (MTR-1-P) into methylthioribulose-1-phosphate (MTRu-1-P). In Caenorhabditis elegans, this protein is Methylthioribose-1-phosphate isomerase.